The chain runs to 1005 residues: Probable beta-galactosidase A (1005 aa).

A signal peptide spans 1–18; it reads MKLLSVAAVALLAAQAAG. Substrate-binding residues include Tyr-96, Asn-140, Ala-141, and Glu-142. Asn-156 carries an N-linked (GlcNAc...) asparagine glycan. Position 199 (Asn-199) interacts with substrate. The active-site Proton donor is Glu-200. An intrachain disulfide couples Cys-205 to Cys-206. Tyr-260 is a binding site for substrate. Cys-266 and Cys-315 form a disulfide bridge. The active-site Nucleophile is Glu-298. A substrate-binding site is contributed by Tyr-364. N-linked (GlcNAc...) asparagine glycosylation is found at Asn-373, Asn-402, Asn-453, Asn-478, Asn-522, Asn-622, Asn-760, Asn-777, Asn-805, and Asn-914.

The protein belongs to the glycosyl hydrolase 35 family.

Its subcellular location is the secreted. The catalysed reaction is Hydrolysis of terminal non-reducing beta-D-galactose residues in beta-D-galactosides.. In terms of biological role, cleaves beta-linked terminal galactosyl residues from gangliosides, glycoproteins, and glycosaminoglycans. This chain is Probable beta-galactosidase A (lacA), found in Aspergillus flavus (strain ATCC 200026 / FGSC A1120 / IAM 13836 / NRRL 3357 / JCM 12722 / SRRC 167).